Reading from the N-terminus, the 374-residue chain is Mannitol-1-phosphate 5-dehydrogenase (374 aa).

An NAD(+)-binding site is contributed by 3 to 14 (AIHFGAGNIGRG).

Belongs to the mannitol dehydrogenase family.

The catalysed reaction is D-mannitol 1-phosphate + NAD(+) = beta-D-fructose 6-phosphate + NADH + H(+). This is Mannitol-1-phosphate 5-dehydrogenase from Halalkalibacterium halodurans (strain ATCC BAA-125 / DSM 18197 / FERM 7344 / JCM 9153 / C-125) (Bacillus halodurans).